A 301-amino-acid polypeptide reads, in one-letter code: MSIDKSYCGFIAIVGRPNVGKSTLLNKLLGQKISITSRKAQTTRHRIVGIHTEGAYQAIYVDTPGLHMEEKRAINRLMNKAASSSIGDVELVIFVVEGTRWTLDDEMVLNKLRDGKAPVILAVNKVDNVQEKADLLPHLQFLASQMNFLDIVPISAETGLNVDTIAAIVRKHLPEATHHFPEDYITDRSQRFMASEIIREKLMRFLGAELPYSVTVEIERFVSNERGGYDINGLILVEREGQKKMVIGNKGAKIKTIGIEARKDMQEMFEAPVHLELWVKVKSGWADDERALRSLGYVDDL.

The Era-type G domain occupies 7 to 175; the sequence is YCGFIAIVGR…AAIVRKHLPE (169 aa). The interval 15 to 22 is G1; sequence GRPNVGKS. 15–22 lines the GTP pocket; the sequence is GRPNVGKS. Positions 41–45 are G2; that stretch reads QTTRH. The tract at residues 62-65 is G3; that stretch reads DTPG. GTP is bound by residues 62–66 and 124–127; these read DTPGL and NKVD. The G4 stretch occupies residues 124–127; that stretch reads NKVD. Positions 154 to 156 are G5; sequence ISA. Positions 206–283 constitute a KH type-2 domain; that stretch reads LGAELPYSVT…HLELWVKVKS (78 aa).

This sequence belongs to the TRAFAC class TrmE-Era-EngA-EngB-Septin-like GTPase superfamily. Era GTPase family. In terms of assembly, monomer.

It localises to the cytoplasm. Its subcellular location is the cell inner membrane. Functionally, an essential GTPase that binds both GDP and GTP, with rapid nucleotide exchange. Plays a role in 16S rRNA processing and 30S ribosomal subunit biogenesis and possibly also in cell cycle regulation and energy metabolism. The chain is GTPase Era from Shigella dysenteriae serotype 1 (strain Sd197).